Consider the following 77-residue polypeptide: Distinctin-like peptide (77 aa).

Residues 1-19 (LKKSLFLVTFLALVPLFLC) form the signal peptide. Positions 20 to 39 (EEEKREEENEERQDDDQSEE) are excised as a propeptide.

This sequence belongs to the frog skin active peptide (FSAP) family. Expressed by the skin glands.

The protein resides in the secreted. Functionally, has antimicrobial activity. The chain is Distinctin-like peptide from Pithecopus azureus (Orange-legged monkey tree frog).